Reading from the N-terminus, the 576-residue chain is Probable DNA ligase (576 aa).

Position 235 (glutamate 235) interacts with ATP. Lysine 237 (N6-AMP-lysine intermediate) is an active-site residue. Residues arginine 242, arginine 257, glutamate 285, phenylalanine 324, arginine 422, and lysine 428 each contribute to the ATP site.

The protein belongs to the ATP-dependent DNA ligase family. Requires Mg(2+) as cofactor.

It carries out the reaction ATP + (deoxyribonucleotide)n-3'-hydroxyl + 5'-phospho-(deoxyribonucleotide)m = (deoxyribonucleotide)n+m + AMP + diphosphate.. Functionally, DNA ligase that seals nicks in double-stranded DNA during DNA replication, DNA recombination and DNA repair. This Koribacter versatilis (strain Ellin345) protein is Probable DNA ligase.